The chain runs to 1151 residues: Chromosome partition protein Smc (1151 aa).

32–39 (PNGCGKSN) serves as a coordination point for ATP. Coiled-coil stretches lie at residues 170–218 (ISGL…AARY), 342–379 (IGRLEWEREALETAHEGHEERLAEAAEAAREAGAALGE), 407–508 (DSRT…REAQ), and 633–994 (LKQL…EGRE). 2 stretches are compositionally biased toward basic and acidic residues: residues 421–438 (RARETVEAAAEAQERAAE) and 465–480 (DEARAEAQSREAEARA). 3 disordered regions span residues 421-483 (RARE…AQRS), 806-826 (SAELAERKAETEEALREAAEA), and 862-889 (LRAAQEAEREAERQAGESREARARAEAR). A compositionally biased stretch (basic and acidic residues) spans 866–889 (QEAEREAERQAGESREARARAEAR).

This sequence belongs to the SMC family. In terms of assembly, homodimer.

The protein resides in the cytoplasm. In terms of biological role, required for chromosome condensation and partitioning. In Cereibacter sphaeroides (strain ATCC 17029 / ATH 2.4.9) (Rhodobacter sphaeroides), this protein is Chromosome partition protein Smc.